The primary structure comprises 416 residues: Serine hydroxymethyltransferase (416 aa).

Residues Leu-121 and 125 to 127 contribute to the (6S)-5,6,7,8-tetrahydrofolate site; that span reads GHL. The residue at position 229 (Lys-229) is an N6-(pyridoxal phosphate)lysine. 354–356 contributes to the (6S)-5,6,7,8-tetrahydrofolate binding site; sequence SPF.

Belongs to the SHMT family. In terms of assembly, homodimer. The cofactor is pyridoxal 5'-phosphate.

Its subcellular location is the cytoplasm. It carries out the reaction (6R)-5,10-methylene-5,6,7,8-tetrahydrofolate + glycine + H2O = (6S)-5,6,7,8-tetrahydrofolate + L-serine. It functions in the pathway one-carbon metabolism; tetrahydrofolate interconversion. It participates in amino-acid biosynthesis; glycine biosynthesis; glycine from L-serine: step 1/1. Functionally, catalyzes the reversible interconversion of serine and glycine with tetrahydrofolate (THF) serving as the one-carbon carrier. This reaction serves as the major source of one-carbon groups required for the biosynthesis of purines, thymidylate, methionine, and other important biomolecules. Also exhibits THF-independent aldolase activity toward beta-hydroxyamino acids, producing glycine and aldehydes, via a retro-aldol mechanism. This is Serine hydroxymethyltransferase from Halorhodospira halophila (strain DSM 244 / SL1) (Ectothiorhodospira halophila (strain DSM 244 / SL1)).